Reading from the N-terminus, the 1009-residue chain is Anillin-like protein 2 (1009 aa).

Disordered regions lie at residues 1 to 29 (MYRR…DSNR), 272 to 295 (FGQE…QTIV), and 539 to 558 (GTGY…PTLV). The segment covering 542–557 (YSASSSGPQFTRSPTL) has biased composition (polar residues). Residues 626 to 657 (SAADKINDSKRQISKLIETIEKTRKHIQLAEI) adopt a coiled-coil conformation. The PH domain occupies 892-1005 (DVEYRGFLYL…WLNAINDTLF (114 aa)).

As to expression, localizes to the surface of the rachis.

Its function is as follows. Required to maintain the structure of the rachis, the central cytoplasmic core of the syncytial adult gonad. Failure to maintain the rachis leads to premature dissociation of oocytes and thereby impedes oogenesis. This is Anillin-like protein 2 (ani-2) from Caenorhabditis elegans.